We begin with the raw amino-acid sequence, 236 residues long: UPF0502 protein BceJ2315_62050 (236 aa).

It belongs to the UPF0502 family.

This is UPF0502 protein BceJ2315_62050 from Burkholderia cenocepacia (strain ATCC BAA-245 / DSM 16553 / LMG 16656 / NCTC 13227 / J2315 / CF5610) (Burkholderia cepacia (strain J2315)).